The sequence spans 443 residues: MSHTMTPSEIVSELDKHIIGQNKAKKAVAVALRNRWRRQQVAEPLRQEITPKNILMIGPTGVGKTEIARRLAKLADAPFIKIEATKFTEVGYVGRDVDTIVRDLAEMAIKQTRESEMKKVRTKAEEAAEDRLLDVLLPPPRDIGFSQPEEKDSNTRQVFRKKLREGQLDDKDIELEVAAGLPSMDIMGPPGMEEMTEQIRSMFAGMGQGKKHRRKMKVKEAFKLLIDEEAAKLVNDEELKHKAIANVEQNGIVFLDEIDKIANRSELGGGEVSRQGVQRDLLPLVEGTTVSTKYGMIKTDHILFIASGAFHLSKPSDLIPELQGRFPIRVELESLSVQDFEAILTQTDASLTKQYQALLKTEEVELQFAPDGIRRLAEIAFSVNEKVENIGARRLYTVMERLLEDLSFHASKSSGETVTIDAAYVNERLGDLAVNEDLSRYVL.

ATP contacts are provided by residues I19, 61 to 66 (GVGKTE), D256, E321, and R393.

This sequence belongs to the ClpX chaperone family. HslU subfamily. A double ring-shaped homohexamer of HslV is capped on each side by a ring-shaped HslU homohexamer. The assembly of the HslU/HslV complex is dependent on binding of ATP.

It is found in the cytoplasm. In terms of biological role, ATPase subunit of a proteasome-like degradation complex; this subunit has chaperone activity. The binding of ATP and its subsequent hydrolysis by HslU are essential for unfolding of protein substrates subsequently hydrolyzed by HslV. HslU recognizes the N-terminal part of its protein substrates and unfolds these before they are guided to HslV for hydrolysis. This is ATP-dependent protease ATPase subunit HslU from Cupriavidus pinatubonensis (strain JMP 134 / LMG 1197) (Cupriavidus necator (strain JMP 134)).